A 301-amino-acid chain; its full sequence is Mating type protein mtA-1 (301 aa).

Positions 49–104 (APKKKVNGFMGFRSYYSSLFSQFPQKARSPFMTILWQHDPFHNEWDFMCSVYSSIR) form a DNA-binding region, alpha box.

This sequence belongs to the MATALPHA1 family.

The protein resides in the nucleus. Mating type proteins are sequence specific DNA-binding proteins that act as master switches in fungal differentiation by controlling gene expression in a cell type-specific fashion. Transcriptional activator that induces the transcription of alpha-specific genes. The sequence is that of Mating type protein mtA-1 (MTA1) from Sordaria fimicola.